The chain runs to 500 residues: NAD(P)H-quinone oxidoreductase chain 4, chloroplastic (500 aa).

15 consecutive transmembrane segments (helical) span residues 4-24, 35-55, 87-107, 113-130, 134-154, 167-187, 211-231, 242-262, 272-292, 305-325, 330-350, 364-384, 386-406, 411-431, and 462-482; these read FPWL…MLFL, YTIC…CYNF, IGTI…AFPV, LFHF…GSFS, LLLF…LLAM, FILY…GISL, ILFY…IPLH, HYST…YGLV, AHSM…IYAA, IAYS…SITD, GAIL…FLAG, MGGM…LSMA, LALP…GIIT, FLIF…LTPI, and LFLS…PDFV.

Belongs to the complex I subunit 4 family.

It localises to the plastid. Its subcellular location is the chloroplast thylakoid membrane. The catalysed reaction is a plastoquinone + NADH + (n+1) H(+)(in) = a plastoquinol + NAD(+) + n H(+)(out). It carries out the reaction a plastoquinone + NADPH + (n+1) H(+)(in) = a plastoquinol + NADP(+) + n H(+)(out). The polypeptide is NAD(P)H-quinone oxidoreductase chain 4, chloroplastic (Capsella bursa-pastoris (Shepherd's purse)).